The following is a 213-amino-acid chain: ABA-inducible protein PHV A1 (213 aa).

Disordered stretches follow at residues 1–158 (MASN…KDKT) and 182–213 (NTLG…TRNH). The span at 13 to 23 (GETKARTEEKT) shows a compositional bias: basic and acidic residues. 9 LEA 11-mer repeat repeats span residues 27 to 37 (MGATKQKAGQT), 38 to 48 (TEATKQKAGET), 49 to 59 (AEATKQKTGET), 60 to 70 (AEAAKQKAAEA), 78 to 88 (AQAAKDKTYET), 89 to 99 (AQAAKERAAQG), 111 to 121 (TEAAKQKAAET), 122 to 132 (TEAAKQKAAEA), and 133 to 143 (TEAAKQKASDT). Positions 27–143 (MGATKQKAGQ…EAAKQKASDT (117 aa)) are 11 X 11 AA tandem repeats of T-E-A-A-K-Q-K-A-A-E-T. 3 stretches are compositionally biased toward basic and acidic residues: residues 41-74 (TKQK…KDKT), 81-98 (AKDK…RAAQ), and 109-140 (EKTE…KQKA). Residues 193 to 213 (ATKDATTGATVKDTTTTTRNH) show a composition bias toward low complexity.

Belongs to the LEA type 4 family.

The protein is ABA-inducible protein PHV A1 (HVA1) of Hordeum vulgare (Barley).